Reading from the N-terminus, the 339-residue chain is MSLKHFLNTQDWSRAELDALLTQAALFKRNKLGSELKGKSIALVFFNPSMRTRTSFELGAFQLGGHAVVLQPGKDAWPIEFNLGTVMDGDTEEHIAEVARVLGRYVDLIGVRAFPKFVDWSKDREDQVLKSFAKYSPVPVINMETITHPCQELAHALALQEHFGTPDLRGKKYVLTWTYHPKPLNTAVANSALTIATRMGMDVTLLCPTPDYILDERYMDWAAQNVAESGGSLQVSHDIDSAYAGADVVYAKSWGALPFFGNWEPEKPIRDQYQHFIVDERKMALTNNGVFSHCLPLRRNVKATDAVMDSPNCIAIDEAENRLHVQKAIMAALVGQSRP.

Residues 49–52, W77, and R112 contribute to the carbamoyl phosphate site; that span reads SMRT. E144 lines the N(2)-acetyl-L-ornithine pocket. A carbamoyl phosphate-binding site is contributed by 148–151; the sequence is HPCQ. N(2)-acetyl-L-ornithine contacts are provided by K252 and L295. 294 to 295 contacts carbamoyl phosphate; it reads CL. Position 302 is an N6-carboxylysine (K302). Carbamoyl phosphate is bound at residue R322.

The protein belongs to the aspartate/ornithine carbamoyltransferase superfamily. AOTCase family. Homotrimer.

The protein resides in the cytoplasm. It carries out the reaction N(2)-acetyl-L-ornithine + carbamoyl phosphate = N(2)-acetyl-L-citrulline + phosphate + H(+). The protein operates within amino-acid biosynthesis; L-arginine biosynthesis. Its activity is regulated as follows. Carboxylation at Lys-302 increases the catalytic activity of the enzyme. Is potently inhibited by N(alpha)-acetyl-N(delta)-phosphonoacetyl-L-ornithine (PALAO). Functionally, catalyzes the transfer of the carbamoyl group from carbamoyl phosphate to the delta-amino group of N(2)-acetyl-L-ornithine to produce N(2)-acetyl-L-citrulline. This is a step in an alternative arginine biosynthesis pathway. The enzyme has no activity with ornithine. The polypeptide is N-acetylornithine carbamoyltransferase (Xanthomonas campestris pv. campestris (strain ATCC 33913 / DSM 3586 / NCPPB 528 / LMG 568 / P 25)).